The primary structure comprises 242 residues: uncharacterized protein (242 aa).

A compositionally biased stretch (low complexity) spans 1–11 (MNFEAASAPSQ). The tract at residues 1 to 45 (MNFEAASAPSQQPSPTPAPKTEEPKENGGSEQQADQPENSKKDDV) is disordered.

The protein to U.parvum UU171.

This is an uncharacterized protein from Ureaplasma parvum serovar 3 (strain ATCC 700970).